Consider the following 231-residue polypeptide: Ribonuclease 3 (231 aa).

The RNase III domain occupies 7-135 (IQAIESKLNF…ILGAVYLDGG (129 aa)). Glutamate 48 provides a ligand contact to Mg(2+). Aspartate 52 is an active-site residue. 2 residues coordinate Mg(2+): asparagine 121 and glutamate 124. The active site involves glutamate 124. Residues 160–229 (NPKNRLQQFT…AKQALSTHDN (70 aa)) enclose the DRBM domain.

It belongs to the ribonuclease III family. Homodimer. Mg(2+) serves as cofactor.

Its subcellular location is the cytoplasm. The catalysed reaction is Endonucleolytic cleavage to 5'-phosphomonoester.. Its function is as follows. Digests double-stranded RNA. Involved in the processing of primary rRNA transcript to yield the immediate precursors to the large and small rRNAs (23S and 16S). Processes some mRNAs, and tRNAs when they are encoded in the rRNA operon. Processes pre-crRNA and tracrRNA of type II CRISPR loci if present in the organism. This is Ribonuclease 3 from Chlamydia trachomatis serovar L2 (strain ATCC VR-902B / DSM 19102 / 434/Bu).